We begin with the raw amino-acid sequence, 72 residues long: Disintegrin batroxostatin (72 aa).

One can recognise a Disintegrin domain in the interval 1 to 72 (EAGEECDCGA…SADCPRNRFY (72 aa)). Disulfide bonds link Cys-6–Cys-21, Cys-8–Cys-16, Cys-15–Cys-38, Cys-29–Cys-35, Cys-34–Cys-59, and Cys-47–Cys-66. The Cell attachment site signature appears at 51–53 (RGD). The interval 52 to 72 (GDNPDDRCTGQSADCPRNRFY) is disordered.

Belongs to the venom metalloproteinase (M12B) family. P-II subfamily. P-IIa sub-subfamily. Monomer. Expressed by the venom gland.

The protein resides in the secreted. Functionally, inhibits fibrinogen interaction with platelets. Acts by binding to the glycoprotein IIb-IIIa receptor (ITGA2B/ITGB3) on the platelet surface and inhibits aggregation induced by ADP, thrombin, platelet-activating factor and collagen. Also inhibits T24 and SK-Mel-28 cell adhesion to fibronectin with IC(50) of 4.4 uM and 33 nM, respectively. The sequence is that of Disintegrin batroxostatin from Bothrops atrox (Barba amarilla).